Here is an 823-residue protein sequence, read N- to C-terminus: Probable inorganic carbon transporter subunit DabA (823 aa).

Zn(2+)-binding residues include Cys-361, Asp-363, His-527, and Cys-542.

This sequence belongs to the inorganic carbon transporter (TC 9.A.2) DabA family. Forms a complex with DabB. Zn(2+) serves as cofactor.

The protein localises to the cell inner membrane. With respect to regulation, intracellular DIC accumulation is sensitive to CCCP (carbonyl cyanide-m-chlorophenylhydrazone) and DCCD (N,N-dicyclohexylcarbodiimide) and therefore likely driven by either proton potential, ATP, or both. In terms of biological role, part of an energy-coupled inorganic carbon pump. Probably involved in transport of dissolved inorganic carbon (DIC) with upstream gene dabB (Tcr_0853); has been suggested to be a proton-DIC symporter. This chain is Probable inorganic carbon transporter subunit DabA, found in Hydrogenovibrio crunogenus (strain DSM 25203 / XCL-2) (Thiomicrospira crunogena).